The sequence spans 404 residues: 4-hydroxy-3-methylbut-2-en-1-yl diphosphate synthase (ferredoxin) (404 aa).

Residues C313, C316, C347, and E354 each coordinate [4Fe-4S] cluster.

The protein belongs to the IspG family. [4Fe-4S] cluster is required as a cofactor.

The catalysed reaction is (2E)-4-hydroxy-3-methylbut-2-enyl diphosphate + 2 oxidized [2Fe-2S]-[ferredoxin] + H2O = 2-C-methyl-D-erythritol 2,4-cyclic diphosphate + 2 reduced [2Fe-2S]-[ferredoxin] + H(+). Its pathway is isoprenoid biosynthesis; isopentenyl diphosphate biosynthesis via DXP pathway; isopentenyl diphosphate from 1-deoxy-D-xylulose 5-phosphate: step 5/6. In terms of biological role, converts 2C-methyl-D-erythritol 2,4-cyclodiphosphate (ME-2,4cPP) into 1-hydroxy-2-methyl-2-(E)-butenyl 4-diphosphate. The protein is 4-hydroxy-3-methylbut-2-en-1-yl diphosphate synthase (ferredoxin) of Crocosphaera subtropica (strain ATCC 51142 / BH68) (Cyanothece sp. (strain ATCC 51142)).